The chain runs to 365 residues: Cyclin-O protein B (365 aa).

A disordered region spans residues 22–64; that stretch reads SGKRKRDSVYSPGDATPGDRGEGEPKCPSVGTKKRAKYSRHRK. Residues 53–64 show a composition bias toward basic residues; sequence TKKRAKYSRHRK.

Belongs to the cyclin family.

Its subcellular location is the cytoplasm. Its function is as follows. Specifically required for generation of multiciliated cells, possibly by promoting a cell cycle state compatible with centriole amplification and maturation. Acts downstream of mcidas to promote mother centriole amplification and maturation in preparation for apical docking. The protein is Cyclin-O protein B (ccno-b) of Xenopus laevis (African clawed frog).